The primary structure comprises 725 residues: Calcium-responsive transcription factor (725 aa).

Positions 572-592 (TSPDESPAVVSVNNQPSSSPS) are disordered. Residues 577-592 (SPAVVSVNNQPSSSPS) show a composition bias toward low complexity.

Its subcellular location is the nucleus. In terms of biological role, acts as a transcriptional activator that mediates the calcium- and neuron-selective induction of BDNF exon III transcription. Binds to the consensus calcium-response element CaRE1 5'-CTATTTCGAG-3' sequence. This chain is Calcium-responsive transcription factor (CARF), found in Homo sapiens (Human).